A 424-amino-acid chain; its full sequence is N-succinylarginine dihydrolase (424 aa).

Substrate is bound by residues Ala-19–Ser-28, Asn-110, and His-137–Arg-138. The active site involves Glu-174. Substrate is bound at residue Arg-206. The active site involves His-242. Positions 244 and 351 each coordinate substrate. The Nucleophile role is filled by Cys-357.

Belongs to the succinylarginine dihydrolase family. Homodimer.

The enzyme catalyses N(2)-succinyl-L-arginine + 2 H2O + 2 H(+) = N(2)-succinyl-L-ornithine + 2 NH4(+) + CO2. It participates in amino-acid degradation; L-arginine degradation via AST pathway; L-glutamate and succinate from L-arginine: step 2/5. Its function is as follows. Catalyzes the hydrolysis of N(2)-succinylarginine into N(2)-succinylornithine, ammonia and CO(2). In Zymomonas mobilis subsp. mobilis (strain ATCC 31821 / ZM4 / CP4), this protein is N-succinylarginine dihydrolase.